The chain runs to 166 residues: Cyanate hydratase (166 aa).

Catalysis depends on residues R92, E95, and S118.

Belongs to the cyanase family.

It carries out the reaction cyanate + hydrogencarbonate + 3 H(+) = NH4(+) + 2 CO2. In terms of biological role, catalyzes the reaction of cyanate with bicarbonate to produce ammonia and carbon dioxide. This is Cyanate hydratase from Zea mays (Maize).